We begin with the raw amino-acid sequence, 189 residues long: T cell receptor gamma constant 2 (189 aa).

One can recognise an Ig-like domain in the interval 10–104 (PKPTIFLPSI…NKNGIDQEII (95 aa)). Cys-32 and Cys-88 are oxidised to a cystine. 5 N-linked (GlcNAc...) asparagine glycosylation sites follow: Asn-66, Asn-120, Asn-136, Asn-142, and Asn-151. A helical transmembrane segment spans residues 155 to 177 (YYTYLLLLLKSVVYFAIITCCLL).

In terms of assembly, gamma-delta TR is a heterodimer composed of a gamma and delta chain; disulfide-linked. The gamma-delta TR is associated with the transmembrane signaling CD3 coreceptor proteins following the stoichiometry: a single gamma-delta TR heterodimer associates with one CD3D-CD3E heterodimer, one CD3G-CD3E heterodimer and one CD247 homodimer forming a stable octameric structure. Upon activation, gamma-delta TR complex associates with FCER1G to initiate intracellular signaling.

It localises to the cell membrane. Its function is as follows. Constant region of T cell receptor (TR) gamma chain that participates in the antigen recognition. Gamma-delta TRs recognize a variety of self and foreign non-peptide antigens frequently expressed at the epithelial boundaries between the host and external environment, including endogenous lipids presented by MH-like protein CD1D and phosphoantigens presented by butyrophilin-like molecule BTN3A1. Upon antigen recognition induces rapid, innate-like immune responses involved in pathogen clearance and tissue repair. Binding of gamma-delta TR complex to antigen triggers phosphorylation of immunoreceptor tyrosine-based activation motifs (ITAMs) in the CD3 chains by the LCK and FYN kinases, allowing the recruitment, phosphorylation, and activation of ZAP70 that facilitates phosphorylation of the scaffolding proteins LCP2 and LAT. This lead to the formation of a supramolecular signalosome that recruits the phospholipase PLCG1, resulting in calcium mobilization and ERK activation, ultimately leading to T cell expansion and differentiation into effector cells. Gamma-delta TRs are produced through somatic rearrangement of a limited repertoire of variable (V), diversity (D), and joining (J) genes. The potential diversity of gamma-delta TRs is conferred by the unique ability to rearrange (D) genes in tandem and to utilize all three reading frames. The combinatorial diversity is considerably increased by the sequence exonuclease trimming and random nucleotide (N) region additions which occur during the V-(D)-J rearrangements. The sequence is that of T cell receptor gamma constant 2 from Homo sapiens (Human).